A 369-amino-acid chain; its full sequence is tRNA-specific 2-thiouridylase MnmA (369 aa).

ATP is bound by residues 12–19 (GMSGGVDS) and Met38. Residues 98-100 (NPD) form an interaction with target base in tRNA region. The active-site Nucleophile is the Cys103. A disulfide bridge links Cys103 with Cys200. An ATP-binding site is contributed by Gly128. Residues 150–152 (KDQ) are interaction with tRNA. Cys200 serves as the catalytic Cysteine persulfide intermediate. The interval 312–313 (RY) is interaction with tRNA.

It belongs to the MnmA/TRMU family. As to quaternary structure, interacts with TusE.

It is found in the cytoplasm. It carries out the reaction S-sulfanyl-L-cysteinyl-[protein] + uridine(34) in tRNA + AH2 + ATP = 2-thiouridine(34) in tRNA + L-cysteinyl-[protein] + A + AMP + diphosphate + H(+). Catalyzes the 2-thiolation of uridine at the wobble position (U34) of tRNA(Lys), tRNA(Glu) and tRNA(Gln), leading to the formation of s(2)U34, the first step of tRNA-mnm(5)s(2)U34 synthesis. Sulfur is provided by IscS, via a sulfur-relay system. Binds ATP and its substrate tRNAs. The protein is tRNA-specific 2-thiouridylase MnmA of Sodalis glossinidius (strain morsitans).